The following is a 37-amino-acid chain: Large ribosomal subunit protein bL36c (37 aa).

Belongs to the bacterial ribosomal protein bL36 family.

The protein resides in the plastid. It localises to the chloroplast. The polypeptide is Large ribosomal subunit protein bL36c (Liriodendron tulipifera (Tuliptree)).